The chain runs to 518 residues: Organic cation/carnitine transporter 3 (518 aa).

The interval 1–23 (MADSTRPLLSDFNSSESNLPPPR) is disordered. Residues 1-32 (MADSTRPLLSDFNSSESNLPPPRSLEETIERC) lie on the Cytoplasmic side of the membrane. Residues 33–53 (IGDFGWAQFLQAALVSFAWFF) form a helical membrane-spanning segment. At 54-122 (DAQQTFITVF…LQCAGSFLKG (69 aa)) the chain is on the extracellular side. N-linked (GlcNAc...) asparagine glycans are attached at residues N83 and N94. A helical transmembrane segment spans residues 123–143 (FPASSFFLGCLIGGLALSTLA). Residues 144 to 157 (DSSLGRKNMLLLSC) lie on the Cytoplasmic side of the membrane. The chain crosses the membrane as a helical span at residues 158-178 (LIMSLSSMLTAFSTSIWVYAF). The Extracellular portion of the chain corresponds to 179–180 (LR). The helical transmembrane segment at 181–197 (FLNGCGRATIGTCALVL) threads the bilayer. 198–205 (STELVGKK) lines the ATP pocket. Over 198 to 210 (STELVGKKWRGQV) the chain is Cytoplasmic. Residues 211-231 (GAMGFFCFTLGFLSLPMLGYI) form a helical membrane-spanning segment. Topologically, residues 232–239 (NEGNSWRN) are extracellular. The chain crosses the membrane as a helical span at residues 240-259 (LYVWTSIPTLIYCCLVRSFV). Over 260–325 (RESPRWLIVK…LVRKSWSFRR (66 aa)) the chain is Cytoplasmic. The helical transmembrane segment at 326–346 (LLAAMVVGFGIGMVYYGMPLA) threads the bilayer. The Extracellular segment spans residues 347–355 (LTNLNFNLY). The helical transmembrane segment at 356-376 (LGVVFNALSEFPAFLITFFFI) threads the bilayer. Residues 377–383 (DKINRRD) lie on the Cytoplasmic side of the membrane. The helical transmembrane segment at 384-404 (ALIGFTALSGISSALIAVLGQ) threads the bilayer. At 405–410 (QLGSLQ) the chain is on the extracellular side. The helical transmembrane segment at 411 to 431 (IVLELVSFFSACTAFNMTLIY) threads the bilayer. The Cytoplasmic segment spans residues 432–443 (TIEMFPTCVRNS). The chain crosses the membrane as a helical span at residues 444-464 (AISMVRQALVFGGVFSPVMVA). At 465–470 (AGRENQ) the chain is on the extracellular side. A helical transmembrane segment spans residues 471-491 (FWSYGLFGLIIGLCGLFVFGL). Residues 492-518 (PETRGSVLCDTMDEEEYKTLAKRQFIG) lie on the Cytoplasmic side of the membrane.

This sequence belongs to the major facilitator (TC 2.A.1) superfamily. Organic cation transporter (TC 2.A.1.19) family. As to expression, mostly expressed in siliques, mainly in young seeds. Present in stems (cortical cells and parenchyma cells), at the basis of secondary inflorescences, and at the base of trichomes.

The protein localises to the vacuole membrane. High affinity carnitine transporter involved in the active cellular uptake of carnitine. Also transports organic cations. In Arabidopsis thaliana (Mouse-ear cress), this protein is Organic cation/carnitine transporter 3 (OCT3).